Here is a 90-residue protein sequence, read N- to C-terminus: RNA silencing suppressor (90 aa).

The interval 15-18 is basic; sequence KRRR.

This sequence belongs to the carlaviruses nucleic acid-binding protein family.

Its function is as follows. Suppressor of viral-induced RNA silencing. The potential mechanism of action is based on sequestering siRNAs. The polypeptide is RNA silencing suppressor (ORF5) (Grapevine virus A (isolate Is 151) (GVA)).